The chain runs to 22 residues: Superoxide dismutase [Cu-Zn] (22 aa).

The protein belongs to the Cu-Zn superoxide dismutase family. Homodimer. Cu cation is required as a cofactor. Requires Zn(2+) as cofactor.

It localises to the cytoplasm. It carries out the reaction 2 superoxide + 2 H(+) = H2O2 + O2. Its function is as follows. Destroys radicals which are normally produced within the cells and which are toxic to biological systems. This chain is Superoxide dismutase [Cu-Zn], found in Hordeum vulgare (Barley).